The primary structure comprises 203 residues: Probable deoxycytidylate deaminase (203 aa).

The 137-residue stretch at 27–163 (HWDDYFMATS…PTYRASKRML (137 aa)) folds into the CMP/dCMP-type deaminase domain. Zn(2+) is bound at residue histidine 102. Glutamate 104 acts as the Proton donor in catalysis. Positions 128 and 131 each coordinate Zn(2+).

This sequence belongs to the cytidine and deoxycytidylate deaminase family. It depends on Zn(2+) as a cofactor.

It carries out the reaction dCMP + H2O + H(+) = dUMP + NH4(+). In terms of biological role, supplies the nucleotide substrate for thymidylate synthetase. In Drosophila melanogaster (Fruit fly), this protein is Probable deoxycytidylate deaminase.